A 231-amino-acid polypeptide reads, in one-letter code: Urease accessory protein UreE (231 aa).

A disordered region spans residues 185 to 231 (VASPLDEPHGSGLHIHGIHSHEEGHSHGDHDHDHSHSHGDHDHDHKH). The span at 203 to 231 (HSHEEGHSHGDHDHDHSHSHGDHDHDHKH) shows a compositional bias: basic and acidic residues.

It belongs to the UreE family.

It localises to the cytoplasm. Involved in urease metallocenter assembly. Binds nickel. Probably functions as a nickel donor during metallocenter assembly. The polypeptide is Urease accessory protein UreE (Yersinia pestis bv. Antiqua (strain Antiqua)).